The following is a 314-amino-acid chain: Beta-ketoacyl-[acyl-carrier-protein] synthase III (314 aa).

Catalysis depends on residues Cys-112 and His-241. Residues 242 to 246 are ACP-binding; the sequence is QANIR. Residue Asn-271 is part of the active site.

Belongs to the thiolase-like superfamily. FabH family. Homodimer.

Its subcellular location is the cytoplasm. It catalyses the reaction malonyl-[ACP] + acetyl-CoA + H(+) = 3-oxobutanoyl-[ACP] + CO2 + CoA. It functions in the pathway lipid metabolism; fatty acid biosynthesis. Catalyzes the condensation reaction of fatty acid synthesis by the addition to an acyl acceptor of two carbons from malonyl-ACP. Catalyzes the first condensation reaction which initiates fatty acid synthesis and may therefore play a role in governing the total rate of fatty acid production. Possesses both acetoacetyl-ACP synthase and acetyl transacylase activities. Its substrate specificity determines the biosynthesis of branched-chain and/or straight-chain of fatty acids. The chain is Beta-ketoacyl-[acyl-carrier-protein] synthase III from Vesicomyosocius okutanii subsp. Calyptogena okutanii (strain HA).